A 356-amino-acid chain; its full sequence is Tyrosine recombinase XerS (356 aa).

One can recognise a Core-binding (CB) domain in the interval 16 to 121 (IMPWYVLDYY…ALSSLYKYLT (106 aa)). In terms of domain architecture, Tyr recombinase spans 169-354 (AFLDYVDKEY…VNDEQKNALD (186 aa)). Active-site residues include Arg-210, Lys-234, His-306, Arg-309, and His-332. Catalysis depends on Tyr-341, which acts as the O-(3'-phospho-DNA)-tyrosine intermediate.

It belongs to the 'phage' integrase family. XerS subfamily.

It is found in the cytoplasm. With respect to regulation, ftsK is required for recombination. In terms of biological role, site-specific tyrosine recombinase, which acts by catalyzing the cutting and rejoining of the recombining DNA molecules. Essential to convert dimers of the bacterial chromosome into monomers to permit their segregation at cell division. The polypeptide is Tyrosine recombinase XerS (Streptococcus pyogenes serotype M1).